A 448-amino-acid polypeptide reads, in one-letter code: Methylenetetrahydrofolate--tRNA-(uracil-5-)-methyltransferase TrmFO (448 aa).

Glycine 10–glycine 15 serves as a coordination point for FAD.

Belongs to the MnmG family. TrmFO subfamily. FAD is required as a cofactor.

It is found in the cytoplasm. The enzyme catalyses uridine(54) in tRNA + (6R)-5,10-methylene-5,6,7,8-tetrahydrofolate + NADH + H(+) = 5-methyluridine(54) in tRNA + (6S)-5,6,7,8-tetrahydrofolate + NAD(+). It catalyses the reaction uridine(54) in tRNA + (6R)-5,10-methylene-5,6,7,8-tetrahydrofolate + NADPH + H(+) = 5-methyluridine(54) in tRNA + (6S)-5,6,7,8-tetrahydrofolate + NADP(+). Catalyzes the folate-dependent formation of 5-methyl-uridine at position 54 (M-5-U54) in all tRNAs. The sequence is that of Methylenetetrahydrofolate--tRNA-(uracil-5-)-methyltransferase TrmFO from Lactococcus lactis subsp. cremoris (strain SK11).